Reading from the N-terminus, the 1026-residue chain is Exportin-T (1026 aa).

This sequence belongs to the exportin family.

The protein localises to the nucleus. It localises to the cytoplasm. TRNA nucleus export receptor which facilitates tRNA translocation across the nuclear pore complex. Involved in pre-tRNA splicing, probably by affecting the interaction of pre-tRNA with splicing endonuclease. This Aspergillus oryzae (strain ATCC 42149 / RIB 40) (Yellow koji mold) protein is Exportin-T (los1).